Consider the following 115-residue polypeptide: Large ribosomal subunit protein bL19 (115 aa).

The protein belongs to the bacterial ribosomal protein bL19 family.

In terms of biological role, this protein is located at the 30S-50S ribosomal subunit interface and may play a role in the structure and function of the aminoacyl-tRNA binding site. This Hydrogenovibrio crunogenus (strain DSM 25203 / XCL-2) (Thiomicrospira crunogena) protein is Large ribosomal subunit protein bL19.